The chain runs to 452 residues: Pentatricopeptide repeat-containing protein At2g30780 (452 aa).

PPR repeat units lie at residues 137–171, 173–207, 208–242, 243–273, 350–384, 385–419, and 420–452; these read TASV…THCA, TVVT…KLPP, NSVT…PVEP, DTDT…IKDQ, KSSI…GWKL, CRSL…NYGL, and VTKT…KRGL.

The protein belongs to the PPR family. P subfamily.

This Arabidopsis thaliana (Mouse-ear cress) protein is Pentatricopeptide repeat-containing protein At2g30780.